Reading from the N-terminus, the 144-residue chain is Large ribosomal subunit protein uL11 (144 aa).

This sequence belongs to the universal ribosomal protein uL11 family. Part of the ribosomal stalk of the 50S ribosomal subunit. Interacts with L10 and the large rRNA to form the base of the stalk. L10 forms an elongated spine to which L12 dimers bind in a sequential fashion forming a multimeric L10(L12)X complex. One or more lysine residues are methylated.

In terms of biological role, forms part of the ribosomal stalk which helps the ribosome interact with GTP-bound translation factors. The polypeptide is Large ribosomal subunit protein uL11 (Deinococcus deserti (strain DSM 17065 / CIP 109153 / LMG 22923 / VCD115)).